We begin with the raw amino-acid sequence, 114 residues long: Hydrogenase maturation factor HypA (114 aa).

A Ni(2+)-binding site is contributed by His2. Residues Cys74, Cys77, Cys90, and Cys93 each coordinate Zn(2+).

Belongs to the HypA/HybF family.

Involved in the maturation of [NiFe] hydrogenases. Required for nickel insertion into the metal center of the hydrogenase. This is Hydrogenase maturation factor HypA from Campylobacter jejuni subsp. jejuni serotype O:2 (strain ATCC 700819 / NCTC 11168).